A 585-amino-acid chain; its full sequence is Arginine--tRNA ligase (585 aa).

The 'HIGH' region signature appears at 127-137 (PNTNKPLHVGH).

The protein belongs to the class-I aminoacyl-tRNA synthetase family. In terms of assembly, monomer.

The protein localises to the cytoplasm. It carries out the reaction tRNA(Arg) + L-arginine + ATP = L-arginyl-tRNA(Arg) + AMP + diphosphate. In Borreliella burgdorferi (strain ATCC 35210 / DSM 4680 / CIP 102532 / B31) (Borrelia burgdorferi), this protein is Arginine--tRNA ligase (argS).